The following is a 611-amino-acid chain: Angiotensin-converting enzyme (611 aa).

Positions 1–17 are cleaved as a signal peptide; the sequence is MKLLVVTILAGLAVCHG. The Peptidase M2 domain occupies 19 to 607; it reads TKEEIVATEY…VESLCHQRYK (589 aa). A glycan (N-linked (GlcNAc...) asparagine) is linked at asparagine 53. Residues cysteine 133 and cysteine 141 are joined by a disulfide bond. Residue asparagine 196 is glycosylated (N-linked (GlcNAc...) asparagine). Cysteine 336 and cysteine 354 are joined by a disulfide. Histidine 367 contributes to the Zn(2+) binding site. The active-site Proton acceptor is glutamate 368. 2 residues coordinate Zn(2+): histidine 371 and glutamate 395. Histidine 497 (proton donor) is an active-site residue. Cysteine 522 and cysteine 540 are oxidised to a cystine. Asparagine 531 carries N-linked (GlcNAc...) asparagine glycosylation.

The protein belongs to the peptidase M2 family. Zn(2+) is required as a cofactor. In terms of tissue distribution, expressed in the compound ganglion and in the posterior region of the midgut.

The protein resides in the secreted. It is found in the extracellular space. The enzyme catalyses Release of a C-terminal dipeptide, oligopeptide-|-Xaa-Yaa, when Xaa is not Pro, and Yaa is neither Asp nor Glu. Thus, conversion of angiotensin I to angiotensin II, with increase in vasoconstrictor activity, but no action on angiotensin II.. Functionally, involved in the specific maturation or degradation of a number of bioactive peptides. This is Angiotensin-converting enzyme (ACE) from Haematobia irritans exigua (Buffalo fly).